A 207-amino-acid chain; its full sequence is Fibroblast growth factor 18 (207 aa).

The signal sequence occupies residues 1–27 (MYSAPSACTCLCLHFLLLCFQVQVLAA). N39 carries an N-linked (GlcNAc...) asparagine glycan. C109 and C127 are joined by a disulfide. A glycan (N-linked (GlcNAc...) asparagine) is linked at N137.

Belongs to the heparin-binding growth factors family. As to quaternary structure, interacts with FGFR3 and FGFR4.

It localises to the secreted. In terms of biological role, plays an important role in the regulation of cell proliferation, cell differentiation and cell migration. Required for normal ossification and bone development. Stimulates hepatic and intestinal proliferation. The polypeptide is Fibroblast growth factor 18 (Fgf18) (Mus musculus (Mouse)).